A 141-amino-acid polypeptide reads, in one-letter code: ER membrane protein complex subunit 5 (141 aa).

Topologically, residues 1 to 6 (MSFVSK) are cytoplasmic. Residues 7–27 (LLYTVSALVLFHSGFSSYEFH) traverse the membrane as a helical segment. Over 28 to 48 (HLLKLNSLNNAQGAISKLPKD) the chain is Lumenal. A helical membrane pass occupies residues 49–69 (IMYETYAGLILFVLAVFTSFE). Residues 70-141 (KLQYLPIESN…WASNTVKKEK (72 aa)) lie on the Cytoplasmic side of the membrane.

It belongs to the membrane magnesium transporter (TC 1.A.67) family. As to quaternary structure, component of the ER membrane protein complex (EMC), which is composed of EMC1, EMC2, EMC3, EMC4, EMC5 and EMC6.

The protein resides in the endoplasmic reticulum membrane. Part of the endoplasmic reticulum membrane protein complex (EMC) that enables the energy-independent insertion into endoplasmic reticulum membranes of newly synthesized membrane proteins. Preferentially accommodates proteins with transmembrane domains that are weakly hydrophobic or contain destabilizing features such as charged and aromatic residues. Involved in the cotranslational insertion of multi-pass membrane proteins in which stop-transfer membrane-anchor sequences become ER membrane spanning helices. It is also required for the post-translational insertion of tail-anchored/TA proteins in endoplasmic reticulum membranes. By mediating the proper cotranslational insertion of N-terminal transmembrane domains in an N-exo topology, with translocated N-terminus in the lumen of the ER, controls the topology of multi-pass membrane proteins. The sequence is that of ER membrane protein complex subunit 5 (EMC5) from Saccharomyces cerevisiae (strain ATCC 204508 / S288c) (Baker's yeast).